The primary structure comprises 1587 residues: DNA topoisomerase 2 (1587 aa).

Over residues 1–15 (MSDADPFDMSDDDDN) the composition is skewed to acidic residues. The segment at 1–47 (MSDADPFDMSDDDDNSVLSHTPPKKQKKAPTTKKGGSKPLADVENES) is disordered. Residues 22 to 31 (PPKKQKKAPT) are compositionally biased toward basic residues. ATP is bound by residues Asn-126, Asn-155, 183–185 (SSN), and 196–203 (GRNGFGAK). 2 interaction with DNA regions span residues 381 to 383 (KKK) and 381 to 386 (KKKNKN). Residue 415 to 417 (QTK) coordinates ATP. The segment at 461–485 (MLKKTDGGRRSRMNNPKLTDANKAG) is disordered. One can recognise a Toprim domain in the interval 492 to 606 (CTLILTEGDS…SLLKIPEFLI (115 aa)). The Mg(2+) site is built by Glu-498, Asp-575, and Asp-577. The 448-residue stretch at 743–1190 (IPSVVDGLKP…SKEDIWKRDL (448 aa)) folds into the Topo IIA-type catalytic domain. Tyr-833 serves as the catalytic O-(5'-phospho-DNA)-tyrosine intermediate. Positions 1016–1025 (KLSKTMTTTN) are interaction with DNA. The disordered stretch occupies residues 1204–1587 (EARRQRKVAN…PRPRRPRRRS (384 aa)). Residues 1271 to 1280 (LSFLGKSSAK) show a composition bias toward low complexity. Over residues 1308 to 1320 (PKSEPKADPKPKD) the composition is skewed to basic and acidic residues. Positions 1321–1334 (EDEDIVMEDSDIEE) are enriched in acidic residues. Residues 1348-1364 (VKPESEDGQAKIAEAPK) are compositionally biased toward basic and acidic residues. A compositionally biased stretch (basic residues) spans 1365-1375 (RGRAAAKPKPK). Composition is skewed to acidic residues over residues 1379-1391 (EDEEDELDDDDFM) and 1419-1430 (SDSDSDNGDDLL). 2 stretches are compositionally biased toward polar residues: residues 1441–1451 (GSTNGASTSDS) and 1466–1475 (GLKTTASKAS). Over residues 1512 to 1521 (DNEPEDDDDE) the composition is skewed to acidic residues. The span at 1524-1542 (KPAAKGKAAAKGKSTAAAA) shows a compositional bias: low complexity. Positions 1558–1568 (PKPPPRLPCPL) are enriched in pro residues. Positions 1571–1587 (RRTHRSNPRPRRPRRRS) are enriched in basic residues.

The protein belongs to the type II topoisomerase family. In terms of assembly, homodimer. It depends on Mg(2+) as a cofactor. Mn(2+) serves as cofactor. Requires Ca(2+) as cofactor.

The protein localises to the nucleus. It catalyses the reaction ATP-dependent breakage, passage and rejoining of double-stranded DNA.. Functionally, control of topological states of DNA by transient breakage and subsequent rejoining of DNA strands. Topoisomerase II makes double-strand breaks. The sequence is that of DNA topoisomerase 2 (TOP2) from Penicillium chrysogenum (Penicillium notatum).